A 152-amino-acid chain; its full sequence is Large ribosomal subunit protein eL14 (152 aa).

Belongs to the eukaryotic ribosomal protein eL14 family.

This Lumbricus rubellus (Humus earthworm) protein is Large ribosomal subunit protein eL14 (RPL14).